We begin with the raw amino-acid sequence, 1493 residues long: ABC transporter C family member 7 (1493 aa).

10 helical membrane passes run 21–41 (FPMF…GSCV), 70–90 (VVIC…LSCF), 102–122 (LMIL…SFYI), 140–160 (VWWV…IALY), 165–185 (LVSV…LFLC), 309–329 (ILLS…APYL), 343–360 (YSNQ…AKLV), 423–443 (WYMH…LILY), 448–468 (LGSI…IPLA), and 535–555 (SVLW…CMLL). The 282-residue stretch at 309-590 (ILLSTLFAFV…LPDTISMIVQ (282 aa)) folds into the ABC transmembrane type-1 1 domain. Positions 624–847 (VEVSNGAFSW…GTDFMELVGA (224 aa)) constitute an ABC transporter 1 domain. Position 659-666 (659-666 (GTVGSGKS)) interacts with ATP. Residues 863-898 (ASAQSTTSKESKVSNDEEKQEEDLPSPKGQLVQEEE) are disordered. S888 bears the Phosphoserine mark. Helical transmembrane passes span 915–935 (LAYG…FQVL), 959–979 (GSTL…CILV), 1038–1055 (FSNL…IGVM), 1059–1081 (AWQV…QYYI), 1153–1173 (LSTV…EGVI), and 1177–1197 (FAGL…TLIW). An ABC transmembrane type-1 2 domain is found at 922–1204 (VPIILVVQIL…LIWTLCDLEN (283 aa)). Positions 1241–1475 (ITICNLQVRY…KSSSFSKLVA (235 aa)) constitute an ABC transporter 2 domain. 1275-1282 (GRTGCGKS) serves as a coordination point for ATP.

It belongs to the ABC transporter superfamily. ABCC family. Conjugate transporter (TC 3.A.1.208) subfamily. Ubiquitous.

The protein localises to the membrane. It carries out the reaction ATP + H2O + xenobioticSide 1 = ADP + phosphate + xenobioticSide 2.. Functionally, pump for glutathione S-conjugates. The protein is ABC transporter C family member 7 (ABCC7) of Arabidopsis thaliana (Mouse-ear cress).